Reading from the N-terminus, the 303-residue chain is T-box protein 38 (303 aa).

The T-box DNA-binding region spans 14–195 (LSTPEIWEEF…HNKFASGFRS (182 aa)). The segment at 193–225 (FRSNGKRRLSSDSENSENSPPKRSKLVTPPTIS) is disordered. The segment covering 204–213 (DSENSENSPP) has biased composition (low complexity).

The protein resides in the nucleus. Transcription factor. Required for mesodermal induction, acting redundantly with transcription factor tbx-37. Together with tbx-37, acts by inducing cell fates in the AB lineage, thereby playing a role in development of the anterior pharynx. This Caenorhabditis elegans protein is T-box protein 38 (tbx-38).